Here is a 526-residue protein sequence, read N- to C-terminus: Bifunctional purine biosynthesis protein PurH (526 aa).

Positions 1 to 145 (MIRTALLSVS…KNHQDVTVLI (145 aa)) constitute an MGS-like domain.

It belongs to the PurH family.

The enzyme catalyses (6R)-10-formyltetrahydrofolate + 5-amino-1-(5-phospho-beta-D-ribosyl)imidazole-4-carboxamide = 5-formamido-1-(5-phospho-D-ribosyl)imidazole-4-carboxamide + (6S)-5,6,7,8-tetrahydrofolate. The catalysed reaction is IMP + H2O = 5-formamido-1-(5-phospho-D-ribosyl)imidazole-4-carboxamide. The protein operates within purine metabolism; IMP biosynthesis via de novo pathway; 5-formamido-1-(5-phospho-D-ribosyl)imidazole-4-carboxamide from 5-amino-1-(5-phospho-D-ribosyl)imidazole-4-carboxamide (10-formyl THF route): step 1/1. It functions in the pathway purine metabolism; IMP biosynthesis via de novo pathway; IMP from 5-formamido-1-(5-phospho-D-ribosyl)imidazole-4-carboxamide: step 1/1. The protein is Bifunctional purine biosynthesis protein PurH of Polynucleobacter necessarius subsp. necessarius (strain STIR1).